Reading from the N-terminus, the 241-residue chain is Large ribosomal subunit protein uL13c (241 aa).

Residues 1–50 (MAVLCSSSTVILSSSSVKSSGSERKSPFLGFSLTAISKPSVRVGIYANSK) constitute a chloroplast transit peptide.

The protein belongs to the universal ribosomal protein uL13 family. In terms of assembly, part of the 50S ribosomal subunit.

The protein localises to the plastid. It is found in the chloroplast. The chain is Large ribosomal subunit protein uL13c (RPL13) from Arabidopsis thaliana (Mouse-ear cress).